Consider the following 546-residue polypeptide: Inosine-5'-monophosphate dehydrogenase (546 aa).

CBS domains are found at residues 135-197 and 198-254; these read FILD…VTAI and MSTD…PLAS. NAD(+)-binding positions include 292–294 and 342–344; these read DSS and GMG. Residues G344 and G346 each contribute to the K(+) site. Residue S347 coordinates IMP. C349 contacts K(+). The active-site Thioimidate intermediate is C349. IMP-binding positions include 382–384, 405–406, and 430–434; these read DGG, GG, and YRGMG. R460 serves as the catalytic Proton acceptor. Position 472 (Q472) interacts with IMP. K(+) contacts are provided by E531 and G532.

This sequence belongs to the IMPDH/GMPR family. Homotetramer. K(+) serves as cofactor.

The protein resides in the cytoplasm. It carries out the reaction IMP + NAD(+) + H2O = XMP + NADH + H(+). It functions in the pathway purine metabolism; XMP biosynthesis via de novo pathway; XMP from IMP: step 1/1. Mycophenolic acid (MPA) is a non-competitive inhibitor that prevents formation of the closed enzyme conformation by binding to the same site as the amobile flap. In contrast, mizoribine monophosphate (MZP) is a competitive inhibitor that induces the closed conformation. MPA is a potent inhibitor of mammalian IMPDHs but a poor inhibitor of the bacterial enzymes. MZP is a more potent inhibitor of bacterial IMPDH. Its function is as follows. Catalyzes the conversion of inosine 5'-phosphate (IMP) to xanthosine 5'-phosphate (XMP), the first committed and rate-limiting step in the de novo synthesis of guanine nucleotides, and therefore plays an important role in the regulation of cell growth. The polypeptide is Inosine-5'-monophosphate dehydrogenase (Aspergillus fumigatus (strain ATCC MYA-4609 / CBS 101355 / FGSC A1100 / Af293) (Neosartorya fumigata)).